A 166-amino-acid chain; its full sequence is Large ribosomal subunit protein uL10 (166 aa).

This sequence belongs to the universal ribosomal protein uL10 family. Part of the ribosomal stalk of the 50S ribosomal subunit. The N-terminus interacts with L11 and the large rRNA to form the base of the stalk. The C-terminus forms an elongated spine to which L12 dimers bind in a sequential fashion forming a multimeric L10(L12)X complex.

Functionally, forms part of the ribosomal stalk, playing a central role in the interaction of the ribosome with GTP-bound translation factors. In Bacillus velezensis (strain DSM 23117 / BGSC 10A6 / LMG 26770 / FZB42) (Bacillus amyloliquefaciens subsp. plantarum), this protein is Large ribosomal subunit protein uL10.